The primary structure comprises 88 residues: ATP synthase subunit c 1 (88 aa).

The next 2 membrane-spanning stretches (helical) occupy residues 4 to 24 (FTWVIITAGFGMAFGSLGTAI) and 53 to 73 (IGLAMVESLAIYVFVVSMIIL).

Belongs to the ATPase C chain family. In terms of assembly, F-type ATPases have 2 components, F(1) - the catalytic core - and F(0) - the membrane proton channel. F(1) has five subunits: alpha(3), beta(3), gamma(1), delta(1), epsilon(1). F(0) has three main subunits: a(1), b(2) and c(10-14). The alpha and beta chains form an alternating ring which encloses part of the gamma chain. F(1) is attached to F(0) by a central stalk formed by the gamma and epsilon chains, while a peripheral stalk is formed by the delta and b chains.

It localises to the cell inner membrane. Functionally, f(1)F(0) ATP synthase produces ATP from ADP in the presence of a proton or sodium gradient. F-type ATPases consist of two structural domains, F(1) containing the extramembraneous catalytic core and F(0) containing the membrane proton channel, linked together by a central stalk and a peripheral stalk. During catalysis, ATP synthesis in the catalytic domain of F(1) is coupled via a rotary mechanism of the central stalk subunits to proton translocation. In terms of biological role, key component of the F(0) channel; it plays a direct role in translocation across the membrane. A homomeric c-ring of between 10-14 subunits forms the central stalk rotor element with the F(1) delta and epsilon subunits. This chain is ATP synthase subunit c 1, found in Syntrophotalea carbinolica (strain DSM 2380 / NBRC 103641 / GraBd1) (Pelobacter carbinolicus).